The chain runs to 1337 residues: Protein cordon-bleu (1337 aa).

The interval 1-41 (MDAPRALAAKPPTGRKMKARAPPPPGKPAAQNVHSEQKLPH) is disordered. 6 positions are modified to phosphoserine: Ser-47, Ser-50, Ser-212, Ser-235, Ser-272, and Ser-294. Disordered stretches follow at residues 260–556 (SKAE…NDDE) and 647–768 (IASQ…HHGQ). Positions 288–317 (CVTTPNSPSLHSRSLTLGPSLSLGNISGVS) are enriched in polar residues. Positions 323–328 (KKRRAP) match the KKRRAP 1 motif. Ser-346 and Ser-349 each carry phosphoserine. Positions 356–361 (KKRRAP) match the KKRRAP 2 motif. Pro residues predominate over residues 361-374 (PAPPPPQQPPPSPV). Position 372 is a phosphoserine (Ser-372). A compositionally biased stretch (basic and acidic residues) spans 377 to 387 (NRKEDKEENRK). The span at 411 to 423 (LVLPPPPPYPPPD) shows a compositional bias: pro residues. Residues 469–480 (ESEETASEDTTE) show a composition bias toward acidic residues. Residues 484–500 (VMSSPSDAISLDSQQDS) show a composition bias toward polar residues. Thr-522 is modified (phosphothreonine). The span at 526–541 (GPQKSPSWGKSGSGSS) shows a compositional bias: low complexity. Polar residues-rich tracts occupy residues 647–666 (IASQ…QPFV) and 687–710 (QPTL…TSLV). Ser-649 carries the post-translational modification Phosphoserine. A compositionally biased stretch (basic and acidic residues) spans 714-736 (LIDDPKAKDKGKVHGSSHSEKTQ). The residue at position 816 (Ser-816) is a Phosphoserine. 2 disordered regions span residues 892-923 (TPQQ…SVKV) and 967-991 (KATT…DDAA). Residue Ser-1038 is modified to Phosphoserine. Residues 1070–1090 (GFNEKQTTSNQKANSTSNFSQ) are compositionally biased toward polar residues. 4 disordered regions span residues 1070–1094 (GFNE…ALDK), 1113–1133 (MNGS…KEST), 1145–1168 (KPSS…FGPK), and 1192–1221 (AIHS…SYVE). Residue Ser-1128 is modified to Phosphoserine. WH2 domains are found at residues 1185–1205 (LHSA…LRKT) and 1225–1245 (ERSA…LRKV). Over residues 1197–1214 (GGREKLRKTAEQTSEGRP) the composition is skewed to basic and acidic residues. The segment at 1262–1310 (GAPGLDKPQQEDLGLPPPPALPPPPAPAPQAPSASVTVSRFSTGTPSNS) is disordered. A compositionally biased stretch (pro residues) spans 1276–1291 (LPPPPALPPPPAPAPQ). A compositionally biased stretch (polar residues) spans 1297-1310 (VTVSRFSTGTPSNS). Ser-1303 bears the Phosphoserine mark. A WH2 3 domain is found at 1313 to 1333 (ARQALMDAIRSGTGAARLRKV).

Identified in a complex composed of COBL, PACSIN1 and WASL. Interacts with PACSIN1, PACSIN2 and PACSIN3. Identified in a complex composed of ACTA1, COBL, GSN and TMSB4X. Interacts (via WH2 domains) with actin monomers. Interacts with DBNL. Detected in brain cortex and in the Purkinje cell layer in the cerebellum. Detected in hippocampus neurons, and at lower levels in testis, lung and spleen (at protein level). Detected in embryonic neural tube.

The protein resides in the cell membrane. It localises to the cytoplasm. The protein localises to the cytoskeleton. It is found in the cell projection. Its subcellular location is the ruffle. In terms of biological role, plays an important role in the reorganization of the actin cytoskeleton. Binds to and sequesters actin monomers (G actin). Nucleates actin polymerization by assembling three actin monomers in cross-filament orientation and thereby promotes growth of actin filaments at the barbed end. Can also mediate actin depolymerization at barbed ends and severing of actin filaments. Promotes formation of cell ruffles. Regulates neuron morphogenesis and increases branching of axons and dendrites. Regulates dendrite branching in Purkinje cells. The chain is Protein cordon-bleu (Cobl) from Mus musculus (Mouse).